Consider the following 300-residue polypeptide: uncharacterized protein (300 aa).

The signal sequence occupies residues 1–19 (MKLKLLLIPLLGSSLLLSA). C20 is lipidated: N-palmitoyl cysteine. Residue C20 is the site of S-diacylglycerol cysteine attachment.

This sequence belongs to the MG439/MG440 family.

The protein resides in the cell membrane. This is an uncharacterized protein from Mycoplasma pneumoniae (strain ATCC 29342 / M129 / Subtype 1) (Mycoplasmoides pneumoniae).